Consider the following 701-residue polypeptide: Elongation factor G (701 aa).

Residues 11 to 287 (TKVRNIGIMA…AVIDYLPSPL (277 aa)) enclose the tr-type G domain. Residues 20–27 (AHIDAGKT), 84–88 (DTPGH), and 138–141 (NKMD) each bind GTP.

It belongs to the TRAFAC class translation factor GTPase superfamily. Classic translation factor GTPase family. EF-G/EF-2 subfamily.

Its subcellular location is the cytoplasm. Catalyzes the GTP-dependent ribosomal translocation step during translation elongation. During this step, the ribosome changes from the pre-translocational (PRE) to the post-translocational (POST) state as the newly formed A-site-bound peptidyl-tRNA and P-site-bound deacylated tRNA move to the P and E sites, respectively. Catalyzes the coordinated movement of the two tRNA molecules, the mRNA and conformational changes in the ribosome. The sequence is that of Elongation factor G from Mycobacterium ulcerans (strain Agy99).